A 200-amino-acid polypeptide reads, in one-letter code: Small ribosomal subunit protein uS4 (200 aa).

The segment at 20–41 (SGTGKELEKRPYAPGQHGPNQR) is disordered. In terms of domain architecture, S4 RNA-binding spans 92 to 155 (ARLDAVVYSL…LKLDIIAESV (64 aa)).

Belongs to the universal ribosomal protein uS4 family. Part of the 30S ribosomal subunit. Contacts protein S5. The interaction surface between S4 and S5 is involved in control of translational fidelity.

One of the primary rRNA binding proteins, it binds directly to 16S rRNA where it nucleates assembly of the body of the 30S subunit. Its function is as follows. With S5 and S12 plays an important role in translational accuracy. The chain is Small ribosomal subunit protein uS4 from Staphylococcus saprophyticus subsp. saprophyticus (strain ATCC 15305 / DSM 20229 / NCIMB 8711 / NCTC 7292 / S-41).